Consider the following 547-residue polypeptide: GID complex substrate-recognition subunit 10 (547 aa).

Composition is skewed to polar residues over residues 1 to 11 and 28 to 41; these read MPRSLDNFQNE and GFPN…SNSQ. 4 disordered regions span residues 1–42, 60–115, 169–217, and 285–313; these read MPRS…NSQR, EQDS…SNAT, RNSS…NPQS, and PAVL…QTPN. Over residues 99 to 108 the composition is skewed to basic residues; sequence SASRQRRRSG. Over residues 169 to 185 the composition is skewed to polar residues; it reads RNSSTFGSNPNSVFSAQ. 3 stretches are compositionally biased toward low complexity: residues 186 to 199, 207 to 217, and 298 to 307; these read PTEP…SSFP, SRSISISNPQS, and SSSSASSYGS.

The protein belongs to the GID4/VID24 family. In terms of assembly, substrate-recognition component of the GID/CTLH complex. In the absence of stress, the complex exists as an inactive anticipatory complex (GID(Ant)), composed of Gid1, the E3 ubiquitin-ligase Gid2, Gid5, Gid8, and the RING-like subunit Gid9, awaiting a substrate receptor to form the active E3 ligase complex. When cells are shifted to glucose-containing medium, the substrate receptor Gid4 is induced and becomes part of the complex, named GID(SR4). Additionally, Gid7 transforms the GID(SR4) E3 ligase core into a higher-order supramolecular assembly (Chelator-GID(SR4)). Under osmotic or heat stress, the substrate receptor Gid10 is induced and becomes part of the complex, named GID(SR10). Interacts with proteins that have an N-terminal Pro/N-degron.

Its subcellular location is the nucleus. Functionally, substrate-recognition component of the GID E3 ligase complex recruiting N termini and catalyzing ubiquitination of proteins targeted for degradation. GID E3 is regulated through assembly with interchangeable N-degron-binding substrate receptors induced by distinct environmental perturbations. Required for the adaptation to osmotic or heat stress. Specific for substrates with an N-terminal Pro (Pro/N-degron). The chain is GID complex substrate-recognition subunit 10 (gid10) from Schizosaccharomyces pombe (strain 972 / ATCC 24843) (Fission yeast).